The primary structure comprises 875 residues: Leucine--tRNA ligase (875 aa).

Over residues 1–20 the composition is skewed to polar residues; sequence MPSAGSVNAANPAVDTSAQT. The segment at 1–22 is disordered; sequence MPSAGSVNAANPAVDTSAQTGR. The short motif at 60-70 is the 'HIGH' region element; it reads PYPSGSLHMGH. A 'KMSKS' region motif is present at residues 634–638; it reads KMSKS. Lys-637 is an ATP binding site.

It belongs to the class-I aminoacyl-tRNA synthetase family.

The protein localises to the cytoplasm. It catalyses the reaction tRNA(Leu) + L-leucine + ATP = L-leucyl-tRNA(Leu) + AMP + diphosphate. The polypeptide is Leucine--tRNA ligase (Synechococcus sp. (strain CC9605)).